Consider the following 103-residue polypeptide: NADH-quinone oxidoreductase subunit K (103 aa).

The next 3 helical transmembrane spans lie at 5 to 25, 30 to 50, and 66 to 86; these read ISSY…GALT, VVVL…LVAF, and LFTM…LIAL.

This sequence belongs to the complex I subunit 4L family. In terms of assembly, NDH-1 is composed of 14 different subunits. Subunits NuoA, H, J, K, L, M, N constitute the membrane sector of the complex.

Its subcellular location is the cell membrane. The enzyme catalyses a quinone + NADH + 5 H(+)(in) = a quinol + NAD(+) + 4 H(+)(out). Functionally, NDH-1 shuttles electrons from NADH, via FMN and iron-sulfur (Fe-S) centers, to quinones in the respiratory chain. The immediate electron acceptor for the enzyme in this species is believed to be a menaquinone. Couples the redox reaction to proton translocation (for every two electrons transferred, four hydrogen ions are translocated across the cytoplasmic membrane), and thus conserves the redox energy in a proton gradient. This chain is NADH-quinone oxidoreductase subunit K, found in Brevibacillus brevis (strain 47 / JCM 6285 / NBRC 100599).